The sequence spans 208 residues: MAQETNHSQVPMLCSTGCGFYGNPRTNGMCSVCYKEHLQRQNSSNGRISPPATSVSSLSESLPVQCTDGSVPEAQSTLDSTSSSMQPSPVSNQSLLSESVASSQLDSTSVDKAVPETEDLQASVSDTAQQPSEEQSKSLEKPKQKKNRCFMCRKKVGLTGFECRCGNVYCGVHRYSDVHNCSYNYKADAAEKIRKENPVVVGEKIQKI.

The A20-type zinc finger occupies 8 to 42; sequence SQVPMLCSTGCGFYGNPRTNGMCSVCYKEHLQRQN. Cys-14, Cys-18, Cys-30, and Cys-33 together coordinate Zn(2+). A compositionally biased stretch (polar residues) spans 41-68; it reads QNSSNGRISPPATSVSSLSESLPVQCTD. A disordered region spans residues 41–140; the sequence is QNSSNGRISP…PSEEQSKSLE (100 aa). Ser-49 bears the Phosphoserine mark. A compositionally biased stretch (low complexity) spans 75–94; that stretch reads QSTLDSTSSSMQPSPVSNQS. Composition is skewed to polar residues over residues 95 to 110 and 120 to 133; these read LLSESVASSQLDSTSV and LQASVSDTAQQPSE. Residues 143 to 189 form an AN1-type zinc finger; sequence KQKKNRCFMCRKKVGLTGFECRCGNVYCGVHRYSDVHNCSYNYKADA. Zn(2+) is bound by residues Cys-149, Cys-152, Cys-163, Cys-165, Cys-170, His-173, His-179, and Cys-181. An N6-acetyllysine modification is found at Lys-204.

Interacts with PKN1. Interacts with TRAF2. Interacts with mono- and polyubiquitin. Interacts with PEX6. Interacts with PEX5 (Cys-linked ubiquitinated).

The protein localises to the cytoplasm. Functionally, involved in regulation of TNF-alpha induced NF-kappa-B activation and apoptosis. Involved in modulation of 'Lys-48'-linked polyubiquitination status of TRAF2 and decreases association of TRAF2 with RIPK1. Required for PTS1 target sequence-dependent protein import into peroxisomes and PEX5 stability; may cooperate with PEX6. In vitro involved in PEX5 export from the cytosol to peroxisomes. The protein is AN1-type zinc finger protein 6 (ZFAND6) of Pongo abelii (Sumatran orangutan).